A 296-amino-acid chain; its full sequence is Formamidopyrimidine-DNA glycosylase (296 aa).

The active-site Schiff-base intermediate with DNA is P2. E3 acts as the Proton donor in catalysis. The active-site Proton donor; for beta-elimination activity is the K61. Positions 95, 122, and 169 each coordinate DNA. The FPG-type zinc finger occupies 255-289 (NAYGRNDQPCARCGTPIQRETFMNRSSYSCPRCQP). The Proton donor; for delta-elimination activity role is filled by R279.

It belongs to the FPG family. As to quaternary structure, monomer. The cofactor is Zn(2+).

It catalyses the reaction Hydrolysis of DNA containing ring-opened 7-methylguanine residues, releasing 2,6-diamino-4-hydroxy-5-(N-methyl)formamidopyrimidine.. It carries out the reaction 2'-deoxyribonucleotide-(2'-deoxyribose 5'-phosphate)-2'-deoxyribonucleotide-DNA = a 3'-end 2'-deoxyribonucleotide-(2,3-dehydro-2,3-deoxyribose 5'-phosphate)-DNA + a 5'-end 5'-phospho-2'-deoxyribonucleoside-DNA + H(+). In terms of biological role, involved in base excision repair of DNA damaged by oxidation or by mutagenic agents. Acts as a DNA glycosylase that recognizes and removes damaged bases. Has a preference for oxidized purines, such as 7,8-dihydro-8-oxoguanine (8-oxoG). Has AP (apurinic/apyrimidinic) lyase activity and introduces nicks in the DNA strand. Cleaves the DNA backbone by beta-delta elimination to generate a single-strand break at the site of the removed base with both 3'- and 5'-phosphates. This chain is Formamidopyrimidine-DNA glycosylase, found in Thermobifida fusca (strain YX).